A 122-amino-acid chain; its full sequence is Protein 7a (122 aa).

The first 15 residues, 1–15 (MKIILFLTLIALATC), serve as a signal peptide directing secretion. The X4e domain occupies 16 to 81 (ELYHYQECVR…RHTYQLRARS (66 aa)). Residues 16–96 (ELYHYQECVR…FIRQEEVYQE (81 aa)) lie on the Virion surface side of the membrane. 2 disulfide bridges follow: Cys-23-Cys-58 and Cys-35-Cys-67. A helical transmembrane segment spans residues 97–117 (LYSPLFLIVAALVFIILCFTI). The Intravirion portion of the chain corresponds to 118–122 (KRKTE). The Di-lysine motif motif lies at 118–122 (KRKTE).

Interacts with the spike glycoprotein, M protein, E protein and the accessory protein 3.

The protein localises to the virion. Its subcellular location is the host endoplasmic reticulum membrane. The protein resides in the host endoplasmic reticulum-Golgi intermediate compartment membrane. It is found in the host Golgi apparatus membrane. Non-structural protein which is dispensable for virus replication in cell culture. This is Protein 7a from Bat coronavirus HKU3 (BtCoV).